The chain runs to 481 residues: U6 small nuclear RNA (adenine-(43)-N(6))-methyltransferase (481 aa).

Residues Lys82, Gly108, Asp131, Thr164, and Asn184 each coordinate S-adenosyl-L-methionine.

It belongs to the methyltransferase superfamily. METTL16/RlmF family. In terms of assembly, self-associates. Interacts with dlc-1; the interaction is direct, and is required for nuclear localization of mett-10.

The protein resides in the nucleus. The catalysed reaction is an adenosine in mRNA + S-adenosyl-L-methionine = an N(6)-methyladenosine in mRNA + S-adenosyl-L-homocysteine + H(+). It carries out the reaction adenosine in U6 snRNA + S-adenosyl-L-methionine = N(6)-methyladenosine in U6 snRNA + S-adenosyl-L-homocysteine + H(+). RNA N6-methyltransferase that methylates adenosine residues at the N(6) position of a subset of RNAs and is involved in S-adenosyl-L-methionine homeostasis by regulating splicing of S-adenosylmethionine synthase transcripts (sams-3, sams-4 and sams-5). Able to N6-methylate a subset of mRNAs containing the 5'UACAGAAAC-3' nonamer sequence. Plays a key role in S-adenosyl-L-methionine homeostasis: under rich-diet conditions, catalyzes N6-methylation of S-adenosylmethionine synthase mRNAs (sams-3, sams-4 and sams-5), directly inhibiting splicing and protein production of S-adenosylmethionine synthase. In addition to mRNAs, also able to mediate N6-methylation of U6 small nuclear RNA (U6 snRNA). Required for gamete production, inhibiting germ cell proliferative fate and ensuring germ cell meiotic development. Also promotes progression of the mitotic cell cycle in those germ cells that continue to proliferate. Plays a role in the development of the vulva, somatic gonad and embryo. The protein is U6 small nuclear RNA (adenine-(43)-N(6))-methyltransferase of Caenorhabditis briggsae.